Reading from the N-terminus, the 284-residue chain is Diaminopimelate epimerase (284 aa).

The substrate site is built by asparagine 14 and asparagine 67. Cysteine 76 serves as the catalytic Proton donor. Substrate-binding positions include 77–78 (GN), asparagine 166, asparagine 199, and 217–218 (ER). The active-site Proton acceptor is cysteine 226. 227–228 (GT) provides a ligand contact to substrate.

Belongs to the diaminopimelate epimerase family. Homodimer.

It localises to the cytoplasm. The enzyme catalyses (2S,6S)-2,6-diaminopimelate = meso-2,6-diaminopimelate. It functions in the pathway amino-acid biosynthesis; L-lysine biosynthesis via DAP pathway; DL-2,6-diaminopimelate from LL-2,6-diaminopimelate: step 1/1. Its function is as follows. Catalyzes the stereoinversion of LL-2,6-diaminopimelate (L,L-DAP) to meso-diaminopimelate (meso-DAP), a precursor of L-lysine and an essential component of the bacterial peptidoglycan. The sequence is that of Diaminopimelate epimerase from Bacillus subtilis (strain 168).